The primary structure comprises 225 residues: Pre-mRNA-splicing factor SPF27 (225 aa).

Ala-2 bears the N-acetylalanine mark. Residue Ser-94 is modified to Phosphoserine. The stretch at 138-222 (YNENLVHMIE…HGEANKENIR (85 aa)) forms a coiled coil.

The protein belongs to the SPF27 family. As to quaternary structure, component of the pre-catalytic and catalytic spliceosome complexes. Component of the postcatalytic spliceosome P complex. Component of the PRP19-CDC5L splicing complex composed of a core complex comprising a homotetramer of PRPF19, CDC5L, PLRG1 and BCAS2, and at least three less stably associated proteins CTNNBL1, CWC15 and HSPA8. Interacts directly in the complex with PRPF19, CDC5L and PLRG1. In terms of tissue distribution, ubiquitously expressed.

It localises to the nucleus. The protein localises to the nucleolus. Required for pre-mRNA splicing as component of the activated spliceosome. Component of the PRP19-CDC5L complex that forms an integral part of the spliceosome and is required for activating pre-mRNA splicing. May have a scaffolding role in the spliceosome assembly as it contacts all other components of the core complex. The PRP19-CDC5L complex may also play a role in the response to DNA damage (DDR). The protein is Pre-mRNA-splicing factor SPF27 (BCAS2) of Homo sapiens (Human).